We begin with the raw amino-acid sequence, 564 residues long: Kelch repeat and BTB domain-containing protein 1 (564 aa).

The region spanning 21-88 is the BTB domain; the sequence is CDINIVINDE…IYGIPLSLTN (68 aa). A BACK domain is found at 123–219; sequence CIDFYIYADK…SLLSPQVIKS (97 aa). Kelch repeat units lie at residues 252–297, 298–346, 347–395, 397–441, and 442–492; these read IELI…VLDN, IIYM…ADDE, YIYC…MLNG, IYVI…VHDG, and KIYI…STHN.

As to quaternary structure, interacts (via BTB domain) with host CUL3.

The protein localises to the host cytoplasm. Functionally, probable substrate-specific adapter of CUL3-containing E3 ubiquitin-protein ligases which mediate the ubiquitination and subsequent proteasomal degradation of host target proteins. The polypeptide is Kelch repeat and BTB domain-containing protein 1 (KBTB1) (Bos taurus (Bovine)).